A 652-amino-acid polypeptide reads, in one-letter code: 2',3'-cyclic-nucleotide 2'-phosphodiesterase/3'-nucleotidase (652 aa).

A signal peptide spans Met-1–Ala-24. Asp-36, His-38, Asp-81, Asn-121, His-230, His-262, and His-264 together coordinate a divalent metal cation. Substrate is bound by residues Tyr-445 and Tyr-549–Lys-555.

Belongs to the 5'-nucleotidase family. It depends on a divalent metal cation as a cofactor.

It is found in the periplasm. The enzyme catalyses a nucleoside 2',3'-cyclic phosphate + H2O = a nucleoside 3'-phosphate + H(+). It catalyses the reaction a ribonucleoside 3'-phosphate + H2O = a ribonucleoside + phosphate. Functionally, this bifunctional enzyme catalyzes two consecutive reactions during ribonucleic acid degradation. Converts a 2',3'-cyclic nucleotide to a 3'-nucleotide and then the 3'-nucleotide to the corresponding nucleoside and phosphate. In Yersinia enterocolitica, this protein is 2',3'-cyclic-nucleotide 2'-phosphodiesterase/3'-nucleotidase (cpdB).